Reading from the N-terminus, the 920-residue chain is Protein translocase subunit SecA (920 aa).

ATP contacts are provided by residues Q85, 103–107 (GEGKT), and D514. 4 residues coordinate Zn(2+): C904, C906, C915, and H916.

Belongs to the SecA family. As to quaternary structure, monomer and homodimer. Part of the essential Sec protein translocation apparatus which comprises SecA, SecYEG and auxiliary proteins SecDF-YajC and YidC. Zn(2+) is required as a cofactor.

It localises to the cell inner membrane. The protein localises to the cytoplasm. The enzyme catalyses ATP + H2O + cellular proteinSide 1 = ADP + phosphate + cellular proteinSide 2.. Functionally, part of the Sec protein translocase complex. Interacts with the SecYEG preprotein conducting channel. Has a central role in coupling the hydrolysis of ATP to the transfer of proteins into and across the cell membrane, serving both as a receptor for the preprotein-SecB complex and as an ATP-driven molecular motor driving the stepwise translocation of polypeptide chains across the membrane. The chain is Protein translocase subunit SecA from Janthinobacterium sp. (strain Marseille) (Minibacterium massiliensis).